A 426-amino-acid polypeptide reads, in one-letter code: Serine--tRNA ligase (426 aa).

231–233 contacts L-serine; it reads TSE. 262–264 provides a ligand contact to ATP; it reads RSE. Glutamate 285 is a binding site for L-serine. ATP is bound at residue 349-352; the sequence is EISS. Serine 385 contacts L-serine.

This sequence belongs to the class-II aminoacyl-tRNA synthetase family. Type-1 seryl-tRNA synthetase subfamily. Homodimer. The tRNA molecule binds across the dimer.

The protein resides in the cytoplasm. The catalysed reaction is tRNA(Ser) + L-serine + ATP = L-seryl-tRNA(Ser) + AMP + diphosphate + H(+). It catalyses the reaction tRNA(Sec) + L-serine + ATP = L-seryl-tRNA(Sec) + AMP + diphosphate + H(+). The protein operates within aminoacyl-tRNA biosynthesis; selenocysteinyl-tRNA(Sec) biosynthesis; L-seryl-tRNA(Sec) from L-serine and tRNA(Sec): step 1/1. Its function is as follows. Catalyzes the attachment of serine to tRNA(Ser). Is also able to aminoacylate tRNA(Sec) with serine, to form the misacylated tRNA L-seryl-tRNA(Sec), which will be further converted into selenocysteinyl-tRNA(Sec). The chain is Serine--tRNA ligase from Legionella pneumophila (strain Corby).